We begin with the raw amino-acid sequence, 179 residues long: Orotate phosphoribosyltransferase (179 aa).

5-phospho-alpha-D-ribose 1-diphosphate is bound by residues arginine 24, arginine 89, lysine 90, lysine 93, and 115 to 123; that span reads EDVITTGGA. Residues threonine 119 and arginine 147 each coordinate orotate.

It belongs to the purine/pyrimidine phosphoribosyltransferase family. PyrE subfamily. As to quaternary structure, homodimer. Mg(2+) is required as a cofactor.

It catalyses the reaction orotidine 5'-phosphate + diphosphate = orotate + 5-phospho-alpha-D-ribose 1-diphosphate. It participates in pyrimidine metabolism; UMP biosynthesis via de novo pathway; UMP from orotate: step 1/2. In terms of biological role, catalyzes the transfer of a ribosyl phosphate group from 5-phosphoribose 1-diphosphate to orotate, leading to the formation of orotidine monophosphate (OMP). The chain is Orotate phosphoribosyltransferase from Nocardioides sp. (strain ATCC BAA-499 / JS614).